The chain runs to 141 residues: Hemoglobin subunit alpha-A (141 aa).

Positions 1–141 constitute a Globin domain; sequence VLNAGDKANV…VGTVLTSKYR (141 aa). Residue H58 coordinates O2. A heme b-binding site is contributed by H87.

The protein belongs to the globin family. As to quaternary structure, heterotetramer of two alpha chains and two beta chains. As to expression, red blood cells.

Its function is as follows. Involved in oxygen transport from the lung to the various peripheral tissues. The protein is Hemoglobin subunit alpha-A (HBAA) of Chrysemys picta bellii (Western painted turtle).